Here is a 94-residue protein sequence, read N- to C-terminus: Protein FAM24B (94 aa).

Residues 1 to 21 (MPVIAGGILAALLLLIVVVLC) form the signal peptide.

It belongs to the FAM24 family.

It localises to the secreted. This is Protein FAM24B (FAM24B) from Homo sapiens (Human).